The sequence spans 315 residues: Putative ankyrin repeat protein R600 (315 aa).

ANK repeat units follow at residues 79 to 108, 118 to 152, 153 to 182, 184 to 211, and 212 to 240; these read NECR…NVHV, SGFG…MVGT, DTCN…DIFS, QSKL…DVTD, and DNNS…DMNT.

This chain is Putative ankyrin repeat protein R600, found in Acanthamoeba polyphaga mimivirus (APMV).